The following is a 456-amino-acid chain: tRNA modification GTPase MnmE (456 aa).

The (6S)-5-formyl-5,6,7,8-tetrahydrofolate site is built by R21, E85, and K124. The TrmE-type G domain maps to Q220 to G379. N230 contributes to the K(+) binding site. GTP is bound by residues N230–S235, S249–T255, and D274–G277. S234 is a Mg(2+) binding site. K(+)-binding residues include S249, I251, and T254. T255 is a binding site for Mg(2+). Residue K456 coordinates (6S)-5-formyl-5,6,7,8-tetrahydrofolate.

The protein belongs to the TRAFAC class TrmE-Era-EngA-EngB-Septin-like GTPase superfamily. TrmE GTPase family. Homodimer. Heterotetramer of two MnmE and two MnmG subunits. Requires K(+) as cofactor.

Its subcellular location is the cytoplasm. Exhibits a very high intrinsic GTPase hydrolysis rate. Involved in the addition of a carboxymethylaminomethyl (cmnm) group at the wobble position (U34) of certain tRNAs, forming tRNA-cmnm(5)s(2)U34. The chain is tRNA modification GTPase MnmE from Leptospira interrogans serogroup Icterohaemorrhagiae serovar copenhageni (strain Fiocruz L1-130).